The following is a 190-amino-acid chain: Pyridoxal 5'-phosphate synthase subunit PdxT (190 aa).

Gly-46 to Ser-48 provides a ligand contact to L-glutamine. Catalysis depends on Cys-78, which acts as the Nucleophile. L-glutamine contacts are provided by residues Arg-105 and Ile-138–Arg-139. Catalysis depends on charge relay system residues His-174 and Glu-176.

Belongs to the glutaminase PdxT/SNO family. In the presence of PdxS, forms a dodecamer of heterodimers. Only shows activity in the heterodimer.

The enzyme catalyses aldehydo-D-ribose 5-phosphate + D-glyceraldehyde 3-phosphate + L-glutamine = pyridoxal 5'-phosphate + L-glutamate + phosphate + 3 H2O + H(+). The catalysed reaction is L-glutamine + H2O = L-glutamate + NH4(+). The protein operates within cofactor biosynthesis; pyridoxal 5'-phosphate biosynthesis. In terms of biological role, catalyzes the hydrolysis of glutamine to glutamate and ammonia as part of the biosynthesis of pyridoxal 5'-phosphate. The resulting ammonia molecule is channeled to the active site of PdxS. In Bifidobacterium longum (strain NCC 2705), this protein is Pyridoxal 5'-phosphate synthase subunit PdxT.